Consider the following 244-residue polypeptide: ATP-dependent Clp protease ATP-binding subunit CLPT4, chloroplastic (244 aa).

The N-terminal 64 residues, 1–64 (MQALQASRLT…WRSSGRVITR (64 aa)), are a transit peptide targeting the chloroplast. Low complexity predominate over residues 30 to 48 (SRPISSGVSSSQELSSRSS). 2 disordered regions span residues 30-55 (SRPI…TKSW) and 220-244 (GRRY…VSFL).

This sequence belongs to the ClpA/ClpB family.

The protein localises to the plastid. It is found in the chloroplast. Its function is as follows. Accessory protein regulating the assembly of the plastid Clp protease system. This Chlamydomonas reinhardtii (Chlamydomonas smithii) protein is ATP-dependent Clp protease ATP-binding subunit CLPT4, chloroplastic.